Reading from the N-terminus, the 64-residue chain is Putative antitoxin VapB51 (64 aa).

Its function is as follows. Possibly the antitoxin component of a type II toxin-antitoxin (TA) system. Its cognate toxin is VapC51. In Mycobacterium tuberculosis (strain ATCC 25618 / H37Rv), this protein is Putative antitoxin VapB51.